Here is a 227-residue protein sequence, read N- to C-terminus: Cytidylate kinase (227 aa).

12 to 20 (GPSGAGKGT) is a binding site for ATP.

It belongs to the cytidylate kinase family. Type 1 subfamily.

It is found in the cytoplasm. It catalyses the reaction CMP + ATP = CDP + ADP. It carries out the reaction dCMP + ATP = dCDP + ADP. The polypeptide is Cytidylate kinase (Shigella boydii serotype 18 (strain CDC 3083-94 / BS512)).